We begin with the raw amino-acid sequence, 137 residues long: Probable S-adenosyl-L-methionine-binding protein MTH_1797 (137 aa).

The TsaA-like domain maps to 8 to 137 (IRPVGVVRSP…YYEDIDSLGF (130 aa)). Residues 25 to 27 (PAQ), 63 to 64 (HL), arginine 87, leucine 97, and 117 to 120 (LDGS) contribute to the S-adenosyl-L-methionine site.

This sequence belongs to the tRNA methyltransferase O family.

The chain is Probable S-adenosyl-L-methionine-binding protein MTH_1797 from Methanothermobacter thermautotrophicus (strain ATCC 29096 / DSM 1053 / JCM 10044 / NBRC 100330 / Delta H) (Methanobacterium thermoautotrophicum).